Consider the following 128-residue polypeptide: Probable 4-amino-4-deoxy-L-arabinose-phosphoundecaprenol flippase subunit ArnF (128 aa).

Over 1-2 (MG) the chain is Cytoplasmic. Residues 3–23 (LIWGLFSVIIASVAQLSLGFA) traverse the membrane as a helical segment. Residues 24 to 35 (ASHLPPMTHLWD) lie on the Periplasmic side of the membrane. Residues 36-56 (FIAALLAFGLDARILLLGLLG) traverse the membrane as a helical segment. Residues 57-76 (YLLSVFCWYKTLHKLALSKA) are Cytoplasmic-facing. Residues 77-97 (YALLSMSYVLVWIASMVLPGW) traverse the membrane as a helical segment. The Periplasmic portion of the chain corresponds to 98 to 100 (EGT). Residues 101 to 121 (FSLKALLGVACIMSGLMLIFL) traverse the membrane as a helical segment. The Cytoplasmic portion of the chain corresponds to 122-128 (PMTKQRY).

The protein belongs to the ArnF family. As to quaternary structure, heterodimer of ArnE and ArnF.

It localises to the cell inner membrane. The protein operates within bacterial outer membrane biogenesis; lipopolysaccharide biosynthesis. Functionally, translocates 4-amino-4-deoxy-L-arabinose-phosphoundecaprenol (alpha-L-Ara4N-phosphoundecaprenol) from the cytoplasmic to the periplasmic side of the inner membrane. This Escherichia coli O9:H4 (strain HS) protein is Probable 4-amino-4-deoxy-L-arabinose-phosphoundecaprenol flippase subunit ArnF.